A 644-amino-acid chain; its full sequence is Ribonuclease R (644 aa).

Residues 211–529 (RINYSHIPFI…LHRLLKELLF (319 aa)) form the RNB domain. One can recognise an S1 motif domain in the interval 573–644 (LELLEKEFLG…ITERIKEHVS (72 aa)).

It belongs to the RNR ribonuclease family. RNase R subfamily.

The protein resides in the cytoplasm. It catalyses the reaction Exonucleolytic cleavage in the 3'- to 5'-direction to yield nucleoside 5'-phosphates.. Its function is as follows. 3'-5' exoribonuclease that releases 5'-nucleoside monophosphates and is involved in maturation of structured RNAs. The sequence is that of Ribonuclease R from Helicobacter pylori (strain ATCC 700392 / 26695) (Campylobacter pylori).